The following is a 717-amino-acid chain: Glutamate--cysteine ligase (717 aa).

The tract at residues serine 484–aspartate 576 is disordered. 2 stretches are compositionally biased toward low complexity: residues alanine 492 to glycine 518 and glycine 551 to threonine 567.

This sequence belongs to the glutamate--cysteine ligase type 3 family.

It carries out the reaction L-cysteine + L-glutamate + ATP = gamma-L-glutamyl-L-cysteine + ADP + phosphate + H(+). The enzyme catalyses (2S)-2-aminobutanoate + L-glutamate + ATP = gamma-L-glutamyl-(2S)-2-aminobutanoate + ADP + phosphate + H(+). The protein operates within sulfur metabolism; glutathione biosynthesis; glutathione from L-cysteine and L-glutamate: step 1/2. Functionally, catalyzes the ATP-dependent ligation of L-glutamate and L-cysteine and participates in the first and rate-limiting step in glutathione biosynthesis. This chain is Glutamate--cysteine ligase, found in Drosophila melanogaster (Fruit fly).